Consider the following 48-residue polypeptide: ATP synthase protein 8 (48 aa).

The helical transmembrane segment at 12-32 (LLTFGMLAISMLLYLVSTIIL) threads the bilayer.

It belongs to the ATPase protein 8 family. F-type ATPases have 2 components, CF(1) - the catalytic core - and CF(0) - the membrane proton channel.

It localises to the mitochondrion membrane. Functionally, mitochondrial membrane ATP synthase (F(1)F(0) ATP synthase or Complex V) produces ATP from ADP in the presence of a proton gradient across the membrane which is generated by electron transport complexes of the respiratory chain. F-type ATPases consist of two structural domains, F(1) - containing the extramembraneous catalytic core and F(0) - containing the membrane proton channel, linked together by a central stalk and a peripheral stalk. During catalysis, ATP synthesis in the catalytic domain of F(1) is coupled via a rotary mechanism of the central stalk subunits to proton translocation. Part of the complex F(0) domain. Minor subunit located with subunit a in the membrane. This chain is ATP synthase protein 8 (ATP8), found in Debaryomyces hansenii (strain ATCC 36239 / CBS 767 / BCRC 21394 / JCM 1990 / NBRC 0083 / IGC 2968) (Yeast).